A 260-amino-acid chain; its full sequence is ProSAAS (260 aa).

Positions 1–33 are cleaved as a signal peptide; the sequence is MAGSPLLWGPRAGGVGLLVLLLLGLFRPPPALC. A proSAAS(1-180) region spans residues 34–215; the sequence is ARPVKEPRGL…SADSEGVAAP (182 aa). The O-linked (GalNAc...) threonine glycan is linked to Thr53. The disordered stretch occupies residues 165 to 188; that stretch reads RPRPPVYDDGPAGPDAEEAGDETP. The span at 179 to 188 shows a compositional bias: acidic residues; the sequence is DAEEAGDETP. Residues 221 to 260 are C-terminal inhibitory domain; interacts with PCSK1; the sequence is AADHDVGSELPPEGVLGALLRVKRLETPAPQVPARRLLPP. A glycan (O-linked (GalNAc...) serine) is linked at Ser228. The Sufficient for inhibition of PCSK1 signature appears at 239–244; the sequence is LLRVKR. Residue Thr247 is glycosylated (O-linked (GalNAc...) threonine).

Interacts via the C-terminal inhibitory domain with PCSK1 66 kDa form. Post-translationally, proteolytically cleaved in the Golgi. O-glycosylated with a core 1 or possibly core 8 glycan. As to expression, expressed in brain and pancreas.

It localises to the secreted. Its subcellular location is the golgi apparatus. It is found in the trans-Golgi network. Functionally, may function in the control of the neuroendocrine secretory pathway. Proposed be a specific endogenous inhibitor of PCSK1. ProSAAS and Big PEN-LEN, both containing the C-terminal inhibitory domain, but not the further processed peptides reduce PCSK1 activity in the endoplasmic reticulum and Golgi. It reduces the activity of the 84 kDa form but not the autocatalytically derived 66 kDa form of PCSK1. Subsequent processing of proSAAS may eliminate the inhibition. Slows down convertase-mediated processing of proopiomelanocortin and proenkephalin. May control the intracellular timing of PCSK1 rather than its total level of activity. Endogenous ligand for GPR171. Neuropeptide involved in the regulation of feeding. In Homo sapiens (Human), this protein is ProSAAS (PCSK1N).